The chain runs to 361 residues: MSSSFGQVFRISTWGESHGTGVGVVIDGCPSLVPVTEEDIQRELDRRRPGQSDIVTPRREEDRAEILSGVLDGKTLGTPIAISVRNKDHRSSAYDEMARTYRPSHADYTYDAKYGIRAWAGGGRASARETIGRVAAGAVARAVLKQAFPDMEVVAWVDQVHHVKASVDWGAVTASAIESNIVRTADPSAAEAMIAAIKEARDSGNSLGGVVKCVVRGCPPGLGDPVFDKLDATLAHAMMSIPATKAFAVGSGFEAADMTGLEHNDPFYMQGCRVRTTTNHSGGIQGGISNGEDILMRIGFKPTATLMIDQQTVNRDGEDARLKGRGRHDACVLPRAVPIVEAMAWLCLCDHYLRQRCQRAL.

NADP(+) is bound at residue R47. Residues 124 to 126 (RAS), G286, 301 to 305 (KPTAT), and R327 each bind FMN.

It belongs to the chorismate synthase family. As to quaternary structure, homotetramer. Requires FMNH2 as cofactor.

The catalysed reaction is 5-O-(1-carboxyvinyl)-3-phosphoshikimate = chorismate + phosphate. Its pathway is metabolic intermediate biosynthesis; chorismate biosynthesis; chorismate from D-erythrose 4-phosphate and phosphoenolpyruvate: step 7/7. Functionally, catalyzes the anti-1,4-elimination of the C-3 phosphate and the C-6 proR hydrogen from 5-enolpyruvylshikimate-3-phosphate (EPSP) to yield chorismate, which is the branch point compound that serves as the starting substrate for the three terminal pathways of aromatic amino acid biosynthesis. This reaction introduces a second double bond into the aromatic ring system. In Akkermansia muciniphila (strain ATCC BAA-835 / DSM 22959 / JCM 33894 / BCRC 81048 / CCUG 64013 / CIP 107961 / Muc), this protein is Chorismate synthase.